The following is a 278-amino-acid chain: Elongation factor Ts (278 aa).

The tract at residues 79-82 (TDFV) is involved in Mg(2+) ion dislocation from EF-Tu.

It belongs to the EF-Ts family.

The protein resides in the cytoplasm. Its function is as follows. Associates with the EF-Tu.GDP complex and induces the exchange of GDP to GTP. It remains bound to the aminoacyl-tRNA.EF-Tu.GTP complex up to the GTP hydrolysis stage on the ribosome. This is Elongation factor Ts from Borrelia duttonii (strain Ly).